Consider the following 400-residue polypeptide: Phosphoglycerate kinase (400 aa).

Substrate contacts are provided by residues 21 to 23 (DFN), arginine 36, 59 to 62 (HLGR), arginine 118, and arginine 151. ATP-binding positions include lysine 201, glycine 293, glutamate 324, and 353-356 (GGDS).

Belongs to the phosphoglycerate kinase family. Monomer.

The protein localises to the cytoplasm. It catalyses the reaction (2R)-3-phosphoglycerate + ATP = (2R)-3-phospho-glyceroyl phosphate + ADP. Its pathway is carbohydrate degradation; glycolysis; pyruvate from D-glyceraldehyde 3-phosphate: step 2/5. The sequence is that of Phosphoglycerate kinase from Fervidobacterium nodosum (strain ATCC 35602 / DSM 5306 / Rt17-B1).